Consider the following 629-residue polypeptide: tRNA uridine 5-carboxymethylaminomethyl modification enzyme MnmG (629 aa).

FAD-binding positions include 14 to 19 (GAGHAG), Val126, and Ser181. 273–287 (GPRYCPSIEDKVVRF) serves as a coordination point for NAD(+). Position 370 (Gln370) interacts with FAD.

This sequence belongs to the MnmG family. Homodimer. Heterotetramer of two MnmE and two MnmG subunits. It depends on FAD as a cofactor.

Its subcellular location is the cytoplasm. In terms of biological role, NAD-binding protein involved in the addition of a carboxymethylaminomethyl (cmnm) group at the wobble position (U34) of certain tRNAs, forming tRNA-cmnm(5)s(2)U34. This is tRNA uridine 5-carboxymethylaminomethyl modification enzyme MnmG from Bacillus cereus (strain ATCC 10987 / NRS 248).